The following is a 158-amino-acid chain: NAD(P)H-quinone oxidoreductase subunit J, chloroplastic (158 aa).

This sequence belongs to the complex I 30 kDa subunit family. NDH is composed of at least 16 different subunits, 5 of which are encoded in the nucleus.

It localises to the plastid. Its subcellular location is the chloroplast thylakoid membrane. It carries out the reaction a plastoquinone + NADH + (n+1) H(+)(in) = a plastoquinol + NAD(+) + n H(+)(out). It catalyses the reaction a plastoquinone + NADPH + (n+1) H(+)(in) = a plastoquinol + NADP(+) + n H(+)(out). Its function is as follows. NDH shuttles electrons from NAD(P)H:plastoquinone, via FMN and iron-sulfur (Fe-S) centers, to quinones in the photosynthetic chain and possibly in a chloroplast respiratory chain. The immediate electron acceptor for the enzyme in this species is believed to be plastoquinone. Couples the redox reaction to proton translocation, and thus conserves the redox energy in a proton gradient. This Vitis vinifera (Grape) protein is NAD(P)H-quinone oxidoreductase subunit J, chloroplastic.